Here is a 439-residue protein sequence, read N- to C-terminus: Skin secretory protein xP2 (439 aa).

Positions 1–22 are cleaved as a signal peptide; sequence MNHKLFCVHFLLLILSVCYIQG. Residues 25–351 are disordered; it reads AGGEPAPAEG…VEVGPKTEDC (327 aa). A run of 5 repeats spans residues 26 to 33, 34 to 41, 42 to 51, 52 to 59, and 60 to 69. The interval 26 to 343 is 33 X approximate repeats of G-G(0,1)-[EV](0,1)-A-P-[A-P](1,3)-A-E; sequence GGEPAPAEGV…APAPAPAPVE (318 aa). Low complexity predominate over residues 26–345; that stretch reads GGEPAPAEGV…APAPAPVEVG (320 aa). Residues 70-77 form a 6; approximate repeat; it reads GAEPAPAD. Repeat copies occupy residues 78 to 87, 88 to 97, 98 to 107, 108 to 115, 116 to 125, 126 to 135, 136 to 145, 146 to 153, and 154 to 163. A 16; approximate repeat occupies 164–173; it reads VEAPAPAPAE. 14 tandem repeats follow at residues 174–183, 184–193, 194–203, 204–215, 216–225, 226–235, 236–245, 246–255, 256–265, 266–275, 276–285, 286–293, 294–303, and 304–313. A 31; approximate repeat occupies 314 to 321; the sequence is GGAPSPAE. The 32; approximate repeat unit spans residues 322–331; sequence GGAPAAAPAE. The stretch at 332-343 is one 33; approximate repeat; the sequence is GGAPAPAPAPVE. P-type domains are found at residues 349-392 and 396-439; these read EDCK…FFPR and AQCL…FHQK. Intrachain disulfides connect Cys-351/Cys-377, Cys-361/Cys-376, Cys-371/Cys-388, Cys-398/Cys-424, Cys-408/Cys-423, and Cys-418/Cys-435.

As to expression, skin.

The protein localises to the secreted. Functionally, may act as a growth factor in the germinal layer of the epidermis. May also be involved in growth of regenerating glands and in protection of the skin from the external environment. This is Skin secretory protein xP2 (p2) from Xenopus laevis (African clawed frog).